The primary structure comprises 340 residues: Glyceraldehyde-3-phosphate dehydrogenase (340 aa).

NAD(+) is bound by residues T11–I12 and G109. Residue S138–N140 coordinates D-glyceraldehyde 3-phosphate. Catalysis depends on C139, which acts as the Nucleophile. Position 167 (R167) interacts with NAD(+). H193–A194 is a binding site for D-glyceraldehyde 3-phosphate. Q300 is a binding site for NAD(+).

This sequence belongs to the glyceraldehyde-3-phosphate dehydrogenase family. Homotetramer.

The protein resides in the cytoplasm. The catalysed reaction is D-glyceraldehyde 3-phosphate + phosphate + NADP(+) = (2R)-3-phospho-glyceroyl phosphate + NADPH + H(+). It catalyses the reaction D-glyceraldehyde 3-phosphate + phosphate + NAD(+) = (2R)-3-phospho-glyceroyl phosphate + NADH + H(+). It participates in carbohydrate degradation; glycolysis; pyruvate from D-glyceraldehyde 3-phosphate: step 1/5. The protein is Glyceraldehyde-3-phosphate dehydrogenase of Metallosphaera sedula (strain ATCC 51363 / DSM 5348 / JCM 9185 / NBRC 15509 / TH2).